The sequence spans 359 residues: Peptide chain release factor 1 (359 aa).

Residue Gln236 is modified to N5-methylglutamine.

Belongs to the prokaryotic/mitochondrial release factor family. Methylated by PrmC. Methylation increases the termination efficiency of RF1.

It localises to the cytoplasm. Functionally, peptide chain release factor 1 directs the termination of translation in response to the peptide chain termination codons UAG and UAA. The chain is Peptide chain release factor 1 from Streptococcus pyogenes serotype M12 (strain MGAS2096).